The sequence spans 239 residues: Hexuronic acid methyltransferase AglP (239 aa).

Belongs to the FkbM methyltransferase family.

The protein localises to the cytoplasm. It functions in the pathway cell surface structure biogenesis; S-layer biogenesis. In terms of biological role, involved in the assembly of a N-linked pentasaccharide that decorates the S-layer glycoprotein and flagellins. S-adenosyl-L-methionine-dependent methyltransferase that modifies the hexuronic acid found at position 4 of the pentasaccharide. The sequence is that of Hexuronic acid methyltransferase AglP (aglP) from Haloferax volcanii (strain ATCC 29605 / DSM 3757 / JCM 8879 / NBRC 14742 / NCIMB 2012 / VKM B-1768 / DS2) (Halobacterium volcanii).